Consider the following 459-residue polypeptide: Bifunctional protein GlmU (459 aa).

Residues 1 to 230 (MSNRFAVILA…FDETLGVNDR (230 aa)) are pyrophosphorylase. Residues 9 to 12 (LAAG), lysine 23, glutamine 73, and 78 to 79 (GT) contribute to the UDP-N-acetyl-alpha-D-glucosamine site. Aspartate 103 serves as a coordination point for Mg(2+). Glycine 140, glutamate 155, asparagine 170, and asparagine 228 together coordinate UDP-N-acetyl-alpha-D-glucosamine. Asparagine 228 provides a ligand contact to Mg(2+). A linker region spans residues 231–251 (VALSQAEIIMKNRINRKNMVN). The tract at residues 252–459 (GVTIIDPSNT…VDQLLNKKKS (208 aa)) is N-acetyltransferase. Positions 333 and 351 each coordinate UDP-N-acetyl-alpha-D-glucosamine. Catalysis depends on histidine 363, which acts as the Proton acceptor. Residues tyrosine 366 and asparagine 377 each coordinate UDP-N-acetyl-alpha-D-glucosamine. Acetyl-CoA contacts are provided by residues 386–387 (NY), alanine 423, and arginine 440.

This sequence in the N-terminal section; belongs to the N-acetylglucosamine-1-phosphate uridyltransferase family. It in the C-terminal section; belongs to the transferase hexapeptide repeat family. As to quaternary structure, homotrimer. Mg(2+) is required as a cofactor.

Its subcellular location is the cytoplasm. It catalyses the reaction alpha-D-glucosamine 1-phosphate + acetyl-CoA = N-acetyl-alpha-D-glucosamine 1-phosphate + CoA + H(+). The enzyme catalyses N-acetyl-alpha-D-glucosamine 1-phosphate + UTP + H(+) = UDP-N-acetyl-alpha-D-glucosamine + diphosphate. The protein operates within nucleotide-sugar biosynthesis; UDP-N-acetyl-alpha-D-glucosamine biosynthesis; N-acetyl-alpha-D-glucosamine 1-phosphate from alpha-D-glucosamine 6-phosphate (route II): step 2/2. It functions in the pathway nucleotide-sugar biosynthesis; UDP-N-acetyl-alpha-D-glucosamine biosynthesis; UDP-N-acetyl-alpha-D-glucosamine from N-acetyl-alpha-D-glucosamine 1-phosphate: step 1/1. Its pathway is bacterial outer membrane biogenesis; LPS lipid A biosynthesis. In terms of biological role, catalyzes the last two sequential reactions in the de novo biosynthetic pathway for UDP-N-acetylglucosamine (UDP-GlcNAc). The C-terminal domain catalyzes the transfer of acetyl group from acetyl coenzyme A to glucosamine-1-phosphate (GlcN-1-P) to produce N-acetylglucosamine-1-phosphate (GlcNAc-1-P), which is converted into UDP-GlcNAc by the transfer of uridine 5-monophosphate (from uridine 5-triphosphate), a reaction catalyzed by the N-terminal domain. In Bacillus mycoides (strain KBAB4) (Bacillus weihenstephanensis), this protein is Bifunctional protein GlmU.